Consider the following 90-residue polypeptide: MPRSLKKGPFIDHHLLQKVDAAVANNERRPIKTWSRRSMIMPQMVGLTIAVHNGRQHVPVLVNENMVGHKLGEFAATRTFKGHVANKKAR.

It belongs to the universal ribosomal protein uS19 family.

Protein S19 forms a complex with S13 that binds strongly to the 16S ribosomal RNA. The protein is Small ribosomal subunit protein uS19 of Thioalkalivibrio sulfidiphilus (strain HL-EbGR7).